Here is a 274-residue protein sequence, read N- to C-terminus: Large ribosomal subunit protein uL2 (274 aa).

Disordered regions lie at residues 28–55 (APHA…RHVG) and 224–274 (VAMN…RRRK).

Belongs to the universal ribosomal protein uL2 family. Part of the 50S ribosomal subunit. Forms a bridge to the 30S subunit in the 70S ribosome.

In terms of biological role, one of the primary rRNA binding proteins. Required for association of the 30S and 50S subunits to form the 70S ribosome, for tRNA binding and peptide bond formation. It has been suggested to have peptidyltransferase activity; this is somewhat controversial. Makes several contacts with the 16S rRNA in the 70S ribosome. This chain is Large ribosomal subunit protein uL2, found in Pseudomonas putida (strain GB-1).